A 152-amino-acid chain; its full sequence is Cytochrome c oxidase subunit 5A, mitochondrial (152 aa).

A mitochondrion-targeting transit peptide spans 1–43; sequence MLGTALRRCAVAAAAASRAGPRGLLHPAPAPGPAAAIQSIRCY. The SIFI-degron motif lies at 2 to 22; that stretch reads LGTALRRCAVAAAAASRAGPR. Lys-89 and Lys-115 each carry N6-acetyllysine. A Phosphothreonine modification is found at Thr-143.

The protein belongs to the cytochrome c oxidase subunit 5A family. As to quaternary structure, component of the cytochrome c oxidase (complex IV, CIV), a multisubunit enzyme composed of 14 subunits. The complex is composed of a catalytic core of 3 subunits MT-CO1, MT-CO2 and MT-CO3, encoded in the mitochondrial DNA, and 11 supernumerary subunits COX4I, COX5A, COX5B, COX6A, COX6B, COX6C, COX7A, COX7B, COX7C, COX8 and NDUFA4, which are encoded in the nuclear genome. The complex exists as a monomer or a dimer and forms supercomplexes (SCs) in the inner mitochondrial membrane with NADH-ubiquinone oxidoreductase (complex I, CI) and ubiquinol-cytochrome c oxidoreductase (cytochrome b-c1 complex, complex III, CIII), resulting in different assemblies (supercomplex SCI(1)III(2)IV(1) and megacomplex MCI(2)III(2)IV(2)). Interacts with AFG1L. Interacts with RAB5IF. Post-translationally, in response to mitochondrial stress, the precursor protein is ubiquitinated by the SIFI complex in the cytoplasm before mitochondrial import, leading to its degradation. Within the SIFI complex, UBR4 initiates ubiquitin chain that are further elongated or branched by KCMF1.

The protein resides in the mitochondrion inner membrane. It functions in the pathway energy metabolism; oxidative phosphorylation. In terms of biological role, component of the cytochrome c oxidase, the last enzyme in the mitochondrial electron transport chain which drives oxidative phosphorylation. The respiratory chain contains 3 multisubunit complexes succinate dehydrogenase (complex II, CII), ubiquinol-cytochrome c oxidoreductase (cytochrome b-c1 complex, complex III, CIII) and cytochrome c oxidase (complex IV, CIV), that cooperate to transfer electrons derived from NADH and succinate to molecular oxygen, creating an electrochemical gradient over the inner membrane that drives transmembrane transport and the ATP synthase. Cytochrome c oxidase is the component of the respiratory chain that catalyzes the reduction of oxygen to water. Electrons originating from reduced cytochrome c in the intermembrane space (IMS) are transferred via the dinuclear copper A center (CU(A)) of subunit 2 and heme A of subunit 1 to the active site in subunit 1, a binuclear center (BNC) formed by heme A3 and copper B (CU(B)). The BNC reduces molecular oxygen to 2 water molecules using 4 electrons from cytochrome c in the IMS and 4 protons from the mitochondrial matrix. The polypeptide is Cytochrome c oxidase subunit 5A, mitochondrial (COX5A) (Eulemur fulvus fulvus (Brown lemur)).